Consider the following 132-residue polypeptide: Ribosome-binding factor A (132 aa).

This sequence belongs to the RbfA family. Monomer. Binds 30S ribosomal subunits, but not 50S ribosomal subunits or 70S ribosomes.

The protein resides in the cytoplasm. One of several proteins that assist in the late maturation steps of the functional core of the 30S ribosomal subunit. Associates with free 30S ribosomal subunits (but not with 30S subunits that are part of 70S ribosomes or polysomes). Required for efficient processing of 16S rRNA. May interact with the 5'-terminal helix region of 16S rRNA. This is Ribosome-binding factor A from Pseudomonas putida (strain GB-1).